Here is a 188-residue protein sequence, read N- to C-terminus: dCTP deaminase (188 aa).

Residues 111-116 (KSTYAR), 135-137 (TLE), Q156, Y170, and Q180 contribute to the dCTP site. The active-site Proton donor/acceptor is the E137.

Belongs to the dCTP deaminase family. In terms of assembly, homotrimer.

It catalyses the reaction dCTP + H2O + H(+) = dUTP + NH4(+). It functions in the pathway pyrimidine metabolism; dUMP biosynthesis; dUMP from dCTP (dUTP route): step 1/2. In terms of biological role, catalyzes the deamination of dCTP to dUTP. The protein is dCTP deaminase of Dechloromonas aromatica (strain RCB).